The primary structure comprises 71 residues: Translation initiation factor IF-1 (71 aa).

One can recognise an S1-like domain in the interval 1–71; that stretch reads MSKDDLIQFT…LTKGRVIHRH (71 aa).

The protein belongs to the IF-1 family. In terms of assembly, component of the 30S ribosomal translation pre-initiation complex which assembles on the 30S ribosome in the order IF-2 and IF-3, IF-1 and N-formylmethionyl-tRNA(fMet); mRNA recruitment can occur at any time during PIC assembly.

It localises to the cytoplasm. In terms of biological role, one of the essential components for the initiation of protein synthesis. Stabilizes the binding of IF-2 and IF-3 on the 30S subunit to which N-formylmethionyl-tRNA(fMet) subsequently binds. Helps modulate mRNA selection, yielding the 30S pre-initiation complex (PIC). Upon addition of the 50S ribosomal subunit IF-1, IF-2 and IF-3 are released leaving the mature 70S translation initiation complex. The protein is Translation initiation factor IF-1 of Rickettsia conorii (strain ATCC VR-613 / Malish 7).